We begin with the raw amino-acid sequence, 336 residues long: Glyceraldehyde-3-phosphate dehydrogenase (336 aa).

Residues 12–13 (RI), D34, R78, and T121 each bind NAD(+). D-glyceraldehyde 3-phosphate-binding positions include 151 to 153 (SCT), T182, R199, 212 to 213 (TG), and R235. The active-site Nucleophile is the C152. N316 contacts NAD(+).

It belongs to the glyceraldehyde-3-phosphate dehydrogenase family. As to quaternary structure, homotetramer.

The protein resides in the cytoplasm. The catalysed reaction is D-glyceraldehyde 3-phosphate + phosphate + NAD(+) = (2R)-3-phospho-glyceroyl phosphate + NADH + H(+). It participates in carbohydrate degradation; glycolysis; pyruvate from D-glyceraldehyde 3-phosphate: step 1/5. Its function is as follows. Catalyzes the oxidative phosphorylation of glyceraldehyde 3-phosphate (G3P) to 1,3-bisphosphoglycerate (BPG) using the cofactor NAD. The first reaction step involves the formation of a hemiacetal intermediate between G3P and a cysteine residue, and this hemiacetal intermediate is then oxidized to a thioester, with concomitant reduction of NAD to NADH. The reduced NADH is then exchanged with the second NAD, and the thioester is attacked by a nucleophilic inorganic phosphate to produce BPG. The polypeptide is Glyceraldehyde-3-phosphate dehydrogenase (gap) (Streptococcus pyogenes serotype M1).